The following is a 336-amino-acid chain: Transmembrane protein 120A (336 aa).

Over 1–131 the chain is Cytoplasmic; sequence MNSPALQDCV…KQSKFAYKDE (131 aa). Position 129 (lysine 129) interacts with CoA. A helical transmembrane segment spans residues 132-151; the sequence is YEKFKLYLTMILMVLSFICR. Residues 152–157 are Extracellular-facing; that stretch reads FVLNSR. A helical membrane pass occupies residues 158–176; the sequence is VTDAVFNFLLVWYYCTLTI. The Cytoplasmic portion of the chain corresponds to 177-189; that stretch reads RESILINNGSRIK. Residues serine 186 and arginine 187 each coordinate CoA. The helical transmembrane segment at 190–208 threads the bilayer; the sequence is GWWVLNHYISTFLSGVMLT. Residues 209–217 are Extracellular-facing; sequence WPDGLMYQM. Residues 218–239 traverse the membrane as a helical segment; that stretch reads FRNQFLSFSMYQSFVQFLQYYY. Residues glutamine 236, tyrosine 239, and glutamine 240 each contribute to the CoA site. The Cytoplasmic portion of the chain corresponds to 240–269; the sequence is QSGCLYRLRALGERHNMDLTVEGFQSWMWR. A helical membrane pass occupies residues 270–293; the sequence is GLTFLLPFLFFGQFWQLYNAITLF. At 294 to 303 the chain is on the extracellular side; it reads KLARHPECKE. The chain crosses the membrane as a helical span at residues 304–329; the sequence is WQVIMCGLPFLVHFLGNFFTTLRVVH. At 330–336 the chain is on the cytoplasmic side; it reads QKFQKQN. Lysine 331 lines the CoA pocket.

The protein belongs to the TMEM120 family. Homodimer.

It is found in the cell membrane. Its subcellular location is the nucleus inner membrane. The protein localises to the endoplasmic reticulum. Its function is as follows. Multifunctional protein involved in mechanosensation, and plays an essential role in lipid metabolism. May function as a potential ion channel involved in sensing mechanical stimuli. TMEM120A is structurally similar to a lipid-modifying enzyme, ELOVL7, and contains a bound coenzyme A molecule, which suggests it might function as an enzyme in lipid metabolism. In Xenopus tropicalis (Western clawed frog), this protein is Transmembrane protein 120A.